We begin with the raw amino-acid sequence, 109 residues long: Large ribosomal subunit protein uL24 (109 aa).

Belongs to the universal ribosomal protein uL24 family. In terms of assembly, part of the 50S ribosomal subunit.

One of two assembly initiator proteins, it binds directly to the 5'-end of the 23S rRNA, where it nucleates assembly of the 50S subunit. Functionally, one of the proteins that surrounds the polypeptide exit tunnel on the outside of the subunit. This chain is Large ribosomal subunit protein uL24, found in Legionella pneumophila (strain Paris).